Reading from the N-terminus, the 206-residue chain is LOB domain-containing protein 35 (206 aa).

The LOB domain occupies 4-105; that stretch reads TCCSACKVMK…EQINSAKNEL (102 aa). Residues 184–206 are disordered; it reads ASTSGGTSATQKTLPFPQNHNQP.

Belongs to the LOB domain-containing protein family.

The protein is LOB domain-containing protein 35 (LBD35) of Arabidopsis thaliana (Mouse-ear cress).